A 280-amino-acid polypeptide reads, in one-letter code: Pantothenate synthetase (280 aa).

Position 31–38 (31–38 (MGNLHAGH)) interacts with ATP. Residue His38 is the Proton donor of the active site. Position 62 (Gln62) interacts with (R)-pantoate. Gln62 contacts beta-alanine. Residue 150 to 153 (GKKD) participates in ATP binding. Gln156 contacts (R)-pantoate. ATP-binding positions include Val179 and 187-190 (MSSR).

Belongs to the pantothenate synthetase family. Homodimer.

The protein resides in the cytoplasm. It catalyses the reaction (R)-pantoate + beta-alanine + ATP = (R)-pantothenate + AMP + diphosphate + H(+). Its pathway is cofactor biosynthesis; (R)-pantothenate biosynthesis; (R)-pantothenate from (R)-pantoate and beta-alanine: step 1/1. Catalyzes the condensation of pantoate with beta-alanine in an ATP-dependent reaction via a pantoyl-adenylate intermediate. This is Pantothenate synthetase from Xanthomonas euvesicatoria pv. vesicatoria (strain 85-10) (Xanthomonas campestris pv. vesicatoria).